The following is a 127-amino-acid chain: MIVGIGTDLVEIARIAALMTKRNEVFAKRILAQQELERFKQHGQPEKFLAKRWAAKEAISKALGTGFTQGVCFTDMIIGHTDQGQPLIELTGKTAEIAQQLGIENWSISISDEAHYAVAFVIAESRS.

Mg(2+) contacts are provided by Asp8 and Glu57.

This sequence belongs to the P-Pant transferase superfamily. AcpS family. Mg(2+) serves as cofactor.

The protein resides in the cytoplasm. It catalyses the reaction apo-[ACP] + CoA = holo-[ACP] + adenosine 3',5'-bisphosphate + H(+). Transfers the 4'-phosphopantetheine moiety from coenzyme A to a Ser of acyl-carrier-protein. This Hydrogenovibrio crunogenus (strain DSM 25203 / XCL-2) (Thiomicrospira crunogena) protein is Holo-[acyl-carrier-protein] synthase.